We begin with the raw amino-acid sequence, 241 residues long: Proteasome subunit alpha (241 aa).

The protein belongs to the peptidase T1A family. In terms of assembly, the 20S proteasome core is composed of 14 alpha and 14 beta subunits that assemble into four stacked heptameric rings, resulting in a barrel-shaped structure. The two inner rings, each composed of seven catalytic beta subunits, are sandwiched by two outer rings, each composed of seven alpha subunits. The catalytic chamber with the active sites is on the inside of the barrel. Has a gated structure, the ends of the cylinder being occluded by the N-termini of the alpha-subunits. Is capped at one or both ends by the proteasome regulatory ATPase, PAN.

The protein localises to the cytoplasm. Its activity is regulated as follows. The formation of the proteasomal ATPase PAN-20S proteasome complex, via the docking of the C-termini of PAN into the intersubunit pockets in the alpha-rings, triggers opening of the gate for substrate entry. Interconversion between the open-gate and close-gate conformations leads to a dynamic regulation of the 20S proteasome proteolysis activity. Functionally, component of the proteasome core, a large protease complex with broad specificity involved in protein degradation. This chain is Proteasome subunit alpha, found in Saccharolobus islandicus (strain M.16.4 / Kamchatka #3) (Sulfolobus islandicus).